We begin with the raw amino-acid sequence, 247 residues long: EGF-like domain-containing protein C02B10.3 (247 aa).

Residues 1 to 17 (MTGALCIVLFGVTMVTA) form the signal peptide. The Extracellular portion of the chain corresponds to 18–220 (ERPKIKDTHG…LCDKRCQKGH (203 aa)). EGF-like domains are found at residues 114 to 150 (FGTSCTPHMCQHNGTIAVGKKEIECICPPPWDGRFCE) and 180 to 213 (SGASCDVIKSCLNNGQLIDGKCKCPDGYYGDLCD). Disulfide bonds link cysteine 123–cysteine 138, cysteine 140–cysteine 149, cysteine 190–cysteine 201, and cysteine 203–cysteine 212. An N-linked (GlcNAc...) asparagine glycan is attached at asparagine 126. Residues 221–240 (VTCSTCSSFIPAALFAIILL) form a helical membrane-spanning segment. Topologically, residues 241–247 (CVNKFNY) are cytoplasmic.

It localises to the membrane. The chain is EGF-like domain-containing protein C02B10.3 from Caenorhabditis elegans.